A 1023-amino-acid chain; its full sequence is 2-oxoglutarate dehydrogenase complex component E1 (1023 aa).

The N-terminal 40 residues, 1-40, are a transit peptide targeting the mitochondrion; the sequence is MFHLRTCAAKLRPLTASQTVKTFSQNRPAAARTFQQIRCY. N6-succinyllysine is present on Lys-74. Ser-100 carries the post-translational modification Phosphoserine. His-143, Asp-156, and Asp-158 together coordinate Ca(2+). Thiamine diphosphate is bound at residue Arg-312. An N6-acetyllysine modification is found at Lys-401. Thiamine diphosphate is bound by residues Asp-411, Asn-444, and Ile-446. The Mg(2+) site is built by Asp-411, Asn-444, and Ile-446. Lys-534 is covalently cross-linked (Glycyl lysine isopeptide (Lys-Gly) (interchain with G-Cter in ubiquitin)). An N6-succinyllysine modification is found at Lys-564. Gln-676 lines the thiamine diphosphate pocket. Lys-970 bears the N6-acetyllysine mark.

Belongs to the alpha-ketoglutarate dehydrogenase family. Homodimer. The 2-oxoglutarate dehydrogenase complex is composed of OGDH (2-oxoglutarate dehydrogenase; E1), DLST (dihydrolipoamide succinyltransferase; E2), DLD (dihydrolipoamide dehydrogenase; E3), and the assembly factor KGD4. It contains multiple copies of the three enzymatic components (E1, E2 and E3). In the nucleus, the 2-oxoglutarate dehydrogenase complex associates with KAT2A. Interacts with ABHD11; this interaction maintains the functional lipoylation of the 2-oxoglutarate dehydrogenase complex. Thiamine diphosphate is required as a cofactor. Mg(2+) serves as cofactor.

Its subcellular location is the mitochondrion. It is found in the nucleus. It carries out the reaction N(6)-[(R)-lipoyl]-L-lysyl-[protein] + 2-oxoglutarate + H(+) = N(6)-[(R)-S(8)-succinyldihydrolipoyl]-L-lysyl-[protein] + CO2. Its activity is regulated as follows. Calcium ions and ADP stimulate, whereas ATP and NADH reduce catalytic activity. In terms of biological role, 2-oxoglutarate dehydrogenase (E1o) component of the 2-oxoglutarate dehydrogenase complex (OGDHC). Participates in the first step, rate limiting for the overall conversion of 2-oxoglutarate to succinyl-CoA and CO(2) catalyzed by the whole OGDHC. Catalyzes the irreversible decarboxylation of 2-oxoglutarate (alpha-ketoglutarate) via the thiamine diphosphate (ThDP) cofactor and subsequent transfer of the decarboxylated acyl intermediate on an oxidized dihydrolipoyl group that is covalently amidated to the E2 enzyme (dihydrolipoyllysine-residue succinyltransferase or DLST). Plays a key role in the Krebs (citric acid) cycle, which is a common pathway for oxidation of fuel molecules, including carbohydrates, fatty acids, and amino acids. Can catalyze the decarboxylation of 2-oxoadipate in vitro, but at a much lower rate than 2-oxoglutarate. Mainly active in the mitochondrion. A fraction of the 2-oxoglutarate dehydrogenase complex also localizes in the nucleus and is required for lysine succinylation of histones: associates with KAT2A on chromatin and provides succinyl-CoA to histone succinyltransferase KAT2A. This chain is 2-oxoglutarate dehydrogenase complex component E1, found in Homo sapiens (Human).